Consider the following 150-residue polypeptide: SsrA-binding protein (150 aa).

This sequence belongs to the SmpB family.

The protein resides in the cytoplasm. Required for rescue of stalled ribosomes mediated by trans-translation. Binds to transfer-messenger RNA (tmRNA), required for stable association of tmRNA with ribosomes. tmRNA and SmpB together mimic tRNA shape, replacing the anticodon stem-loop with SmpB. tmRNA is encoded by the ssrA gene; the 2 termini fold to resemble tRNA(Ala) and it encodes a 'tag peptide', a short internal open reading frame. During trans-translation Ala-aminoacylated tmRNA acts like a tRNA, entering the A-site of stalled ribosomes, displacing the stalled mRNA. The ribosome then switches to translate the ORF on the tmRNA; the nascent peptide is terminated with the 'tag peptide' encoded by the tmRNA and targeted for degradation. The ribosome is freed to recommence translation, which seems to be the essential function of trans-translation. The chain is SsrA-binding protein from Campylobacter jejuni subsp. jejuni serotype O:6 (strain 81116 / NCTC 11828).